Consider the following 538-residue polypeptide: Bifunctional purine biosynthesis protein PurH (538 aa).

In terms of domain architecture, MGS-like spans 6 to 158; that stretch reads KHIPAPDLHR…KNHAYVATVV (153 aa).

It belongs to the PurH family.

It carries out the reaction (6R)-10-formyltetrahydrofolate + 5-amino-1-(5-phospho-beta-D-ribosyl)imidazole-4-carboxamide = 5-formamido-1-(5-phospho-D-ribosyl)imidazole-4-carboxamide + (6S)-5,6,7,8-tetrahydrofolate. It catalyses the reaction IMP + H2O = 5-formamido-1-(5-phospho-D-ribosyl)imidazole-4-carboxamide. It functions in the pathway purine metabolism; IMP biosynthesis via de novo pathway; 5-formamido-1-(5-phospho-D-ribosyl)imidazole-4-carboxamide from 5-amino-1-(5-phospho-D-ribosyl)imidazole-4-carboxamide (10-formyl THF route): step 1/1. Its pathway is purine metabolism; IMP biosynthesis via de novo pathway; IMP from 5-formamido-1-(5-phospho-D-ribosyl)imidazole-4-carboxamide: step 1/1. This chain is Bifunctional purine biosynthesis protein PurH, found in Brucella ovis (strain ATCC 25840 / 63/290 / NCTC 10512).